Here is a 382-residue protein sequence, read N- to C-terminus: Transforming growth factor beta-1 proprotein (382 aa).

A signal peptide spans 1 to 20; sequence MRAVCLMLTALLMLEYVCRS. The interval 23–68 is straightjacket domain; sequence MSTCKSLDLELVKRKRIEAIRGQILSKLRLPKEPEIDQEGDTEEVP. The arm domain stretch occupies residues 69–264; sequence ASLMSIYNST…SLPVERHSQL (196 aa). Residues Asn-76, Asn-116, and Asn-125 are each glycosylated (N-linked (GlcNAc...) asparagine). Residues 218–243 are bowtie tail; it reads GKPMEEFRFKISGMNKLRGNTETLAM. The short motif at 235-237 is the Cell attachment site element; that stretch reads RGN. 4 disulfide bridges follow: Cys-278-Cys-286, Cys-285-Cys-348, Cys-314-Cys-379, and Cys-318-Cys-381.

This sequence belongs to the TGF-beta family. Latency-associated peptide: Homodimer; disulfide-linked. Latency-associated peptide: Interacts with Transforming growth factor beta-1 (TGF-beta-1) chain; interaction is non-covalent and maintains (TGF-beta-1) in a latent state; each Latency-associated peptide (LAP) monomer interacts with TGF-beta-1 in the other monomer. Transforming growth factor beta-1: Homodimer; disulfide-linked. Transforming growth factor beta-1: Interacts with TGF-beta receptors (tgfbr1 and tgfbr2), leading to signal transduction. Interacts with EFEMP2. In terms of processing, transforming growth factor beta-1 proprotein: The precursor proprotein is cleaved in the Golgi apparatus to form Transforming growth factor beta-1 (TGF-beta-1) and Latency-associated peptide (LAP) chains, which remain non-covalently linked, rendering TGF-beta-1 inactive. Expressed in blood leukocytes, kidney macrophages, brain, gill and spleen but not in liver.

It localises to the secreted. The protein resides in the extracellular space. Its subcellular location is the extracellular matrix. In terms of biological role, transforming growth factor beta-1 proprotein: Precursor of the Latency-associated peptide (LAP) and Transforming growth factor beta-1 (TGF-beta-1) chains, which constitute the regulatory and active subunit of TGF-beta-1, respectively. Its function is as follows. Required to maintain the Transforming growth factor beta-1 (TGF-beta-1) chain in a latent state during storage in extracellular matrix. Associates non-covalently with TGF-beta-1 and regulates its activation via interaction with 'milieu molecules', such as LTBP1, LRRC32/GARP and LRRC33/NRROS, that control activation of TGF-beta-1. Interaction with integrins (ITGAV:ITGB6 or ITGAV:ITGB8) results in distortion of the Latency-associated peptide chain and subsequent release of the active TGF-beta-1. Functionally, transforming growth factor beta-1: Multifunctional protein that regulates the growth and differentiation of various cell types and is involved in various processes, such as normal development, immune function, microglia function and responses to neurodegeneration. Activation into mature form follows different steps: following cleavage of the proprotein in the Golgi apparatus, Latency-associated peptide (LAP) and Transforming growth factor beta-1 (TGF-beta-1) chains remain non-covalently linked rendering TGF-beta-1 inactive during storage in extracellular matrix. At the same time, LAP chain interacts with 'milieu molecules', such as ltbp1, lrrc32/garp and lrrc33/nrros that control activation of TGF-beta-1 and maintain it in a latent state during storage in extracellular milieus. TGF-beta-1 is released from LAP by integrins (ITGAV:ITGB6 or ITGAV:ITGB8): integrin-binding to LAP stabilizes an alternative conformation of the LAP bowtie tail and results in distortion of the LAP chain and subsequent release of the active TGF-beta-1. Once activated following release of LAP, TGF-beta-1 acts by binding to TGF-beta receptors (tgfbr1 and tgfbr2), which transduce signal. While expressed by many cells types, TGF-beta-1 only has a very localized range of action within cell environment thanks to fine regulation of its activation by Latency-associated peptide chain (LAP) and 'milieu molecules'. Plays an important role in bone remodeling: acts as a potent stimulator of osteoblastic bone formation. Can promote either T-helper 17 cells (Th17) or regulatory T-cells (Treg) lineage differentiation in a concentration-dependent manner. Can induce epithelial-to-mesenchymal transition (EMT) and cell migration in various cell types. This chain is Transforming growth factor beta-1 proprotein (tgfb1), found in Oncorhynchus mykiss (Rainbow trout).